The sequence spans 454 residues: Phosphoglucosamine mutase (454 aa).

Ser-104 (phosphoserine intermediate) is an active-site residue. Positions 104, 244, 246, and 248 each coordinate Mg(2+). Ser-104 is subject to Phosphoserine.

Belongs to the phosphohexose mutase family. Mg(2+) is required as a cofactor. Activated by phosphorylation.

It carries out the reaction alpha-D-glucosamine 1-phosphate = D-glucosamine 6-phosphate. Catalyzes the conversion of glucosamine-6-phosphate to glucosamine-1-phosphate. The polypeptide is Phosphoglucosamine mutase (Lacticaseibacillus paracasei (strain ATCC 334 / BCRC 17002 / CCUG 31169 / CIP 107868 / KCTC 3260 / NRRL B-441) (Lactobacillus paracasei)).